A 157-amino-acid polypeptide reads, in one-letter code: Crossover junction endodeoxyribonuclease RuvC (157 aa).

Residues D7, E67, and D140 contribute to the active site. Mg(2+)-binding residues include D7, E67, and D140.

The protein belongs to the RuvC family. As to quaternary structure, homodimer which binds Holliday junction (HJ) DNA. The HJ becomes 2-fold symmetrical on binding to RuvC with unstacked arms; it has a different conformation from HJ DNA in complex with RuvA. In the full resolvosome a probable DNA-RuvA(4)-RuvB(12)-RuvC(2) complex forms which resolves the HJ. The cofactor is Mg(2+).

It is found in the cytoplasm. It carries out the reaction Endonucleolytic cleavage at a junction such as a reciprocal single-stranded crossover between two homologous DNA duplexes (Holliday junction).. Its function is as follows. The RuvA-RuvB-RuvC complex processes Holliday junction (HJ) DNA during genetic recombination and DNA repair. Endonuclease that resolves HJ intermediates. Cleaves cruciform DNA by making single-stranded nicks across the HJ at symmetrical positions within the homologous arms, yielding a 5'-phosphate and a 3'-hydroxyl group; requires a central core of homology in the junction. The consensus cleavage sequence is 5'-(A/T)TT(C/G)-3'. Cleavage occurs on the 3'-side of the TT dinucleotide at the point of strand exchange. HJ branch migration catalyzed by RuvA-RuvB allows RuvC to scan DNA until it finds its consensus sequence, where it cleaves and resolves the cruciform DNA. This chain is Crossover junction endodeoxyribonuclease RuvC, found in Rickettsia massiliae (strain Mtu5).